Here is a 732-residue protein sequence, read N- to C-terminus: Elongation factor 2 (732 aa).

The 242-residue stretch at E19–R260 folds into the tr-type G domain. GTP is bound by residues A28–T35, D94–H98, and N148–D151. A Diphthamide modification is found at H598.

The protein belongs to the TRAFAC class translation factor GTPase superfamily. Classic translation factor GTPase family. EF-G/EF-2 subfamily.

The protein localises to the cytoplasm. Its function is as follows. Catalyzes the GTP-dependent ribosomal translocation step during translation elongation. During this step, the ribosome changes from the pre-translocational (PRE) to the post-translocational (POST) state as the newly formed A-site-bound peptidyl-tRNA and P-site-bound deacylated tRNA move to the P and E sites, respectively. Catalyzes the coordinated movement of the two tRNA molecules, the mRNA and conformational changes in the ribosome. This chain is Elongation factor 2, found in Picrophilus torridus (strain ATCC 700027 / DSM 9790 / JCM 10055 / NBRC 100828 / KAW 2/3).